The sequence spans 278 residues: Tryptophan synthase alpha chain (278 aa).

Active-site proton acceptor residues include E49 and D60.

Belongs to the TrpA family. As to quaternary structure, tetramer of two alpha and two beta chains.

The enzyme catalyses (1S,2R)-1-C-(indol-3-yl)glycerol 3-phosphate + L-serine = D-glyceraldehyde 3-phosphate + L-tryptophan + H2O. The protein operates within amino-acid biosynthesis; L-tryptophan biosynthesis; L-tryptophan from chorismate: step 5/5. Its function is as follows. The alpha subunit is responsible for the aldol cleavage of indoleglycerol phosphate to indole and glyceraldehyde 3-phosphate. This is Tryptophan synthase alpha chain from Corynebacterium diphtheriae (strain ATCC 700971 / NCTC 13129 / Biotype gravis).